A 465-amino-acid chain; its full sequence is MTDSPPCSSDSASSVPSQLHYHLMGIGGIGVSAFARLLAARGVRVSGCDTQPSELTEQLVREGIPVALGHDPAHVTGVDVLIASEAVPKNHPELVAARGAGVEVRPRMALLDELLRAGPSVGVIGTHGKTTTTSMIAVAMQGAGLDPAAFVGGIVPEFGSNVRLGTGPFVAEVDESDRGFAVLSCETAVFTNAEDDHVGGNQATYWETVEQQHAAFARFVGQARRVLYCADWPGLDQLVTTSGERLNYGLAEGADYRAVDLRPDAEGTTFTVARRGEVLGEARVGLPGLHNVLNALAALAVTDLYGGNFQTAAAALAAFRGPGRRWQRIGELNGALIIDDYAHNATKVAAAVQAARQTGRRVRVVFQPHRYLRTQQSWPRLADALMGADEVLVLDIATASEPPIPGIHATLVSDRMAQSGHTGVRYAPDRAEVVRYLRETACADDVIVTMGAGDVWKLSRELASV.

125-131 (GTHGKTT) provides a ligand contact to ATP.

It belongs to the MurCDEF family.

It is found in the cytoplasm. It catalyses the reaction UDP-N-acetyl-alpha-D-muramate + L-alanine + ATP = UDP-N-acetyl-alpha-D-muramoyl-L-alanine + ADP + phosphate + H(+). Its pathway is cell wall biogenesis; peptidoglycan biosynthesis. Functionally, cell wall formation. The polypeptide is UDP-N-acetylmuramate--L-alanine ligase (Deinococcus geothermalis (strain DSM 11300 / CIP 105573 / AG-3a)).